We begin with the raw amino-acid sequence, 479 residues long: Adenylate kinase 8 (479 aa).

2 adenylate kinase regions span residues 58-258 (PRVV…TYVQ) and 269-471 (PKVL…SGII). Position 67–72 (67–72 (ASGKTT)) interacts with ATP. The NMP 1 stretch occupies residues 87–113 (TKENLLEREFSLLSLEAKKHYQVYKRV). Residues 140-143 (GIPE), Q147, and R203 each bind AMP. Residues 177–206 (GKRIDPVTGEIYHTTFDWPPELEIQNRLIQ) are LID 1. Position 278–283 (278–283 (GCGKKL)) interacts with ATP. Residues 298-327 (SCGQLLKEAMAAESSLGDLIEPFFEKRMTV) are NMP 2. AMP contacts are provided by residues 325-327 (MTV), 354-357 (GFPR), and Q361. The LID 2 stretch occupies residues 391 to 424 (LRRTDPVTGERFHLMYKPPPTIEVQARLLQNPKD). Residue R392 coordinates ATP.

It belongs to the adenylate kinase family. In terms of assembly, interacts with CFAP45 and CFAP52; CFAP45 and AK8 dimerization may create a cavity at the interface of the dimer that can accommodate AMP.

It localises to the cytoplasm. The protein resides in the cytosol. The protein localises to the cytoskeleton. It is found in the cilium axoneme. The enzyme catalyses AMP + ATP = 2 ADP. The catalysed reaction is a 2'-deoxyribonucleoside 5'-diphosphate + ATP = a 2'-deoxyribonucleoside 5'-triphosphate + ADP. It catalyses the reaction a ribonucleoside 5'-diphosphate + ATP = a ribonucleoside 5'-triphosphate + ADP. Its function is as follows. Nucleoside monophosphate (NMP) kinase that catalyzes the reversible transfer of the terminal phosphate group between nucleoside triphosphates and monophosphates. Has highest activity toward AMP, and weaker activity toward dAMP, CMP and dCMP. Also displays broad nucleoside diphosphate kinase activity. The chain is Adenylate kinase 8 (Ak8) from Rattus norvegicus (Rat).